The chain runs to 144 residues: Large ribosomal subunit protein uL15 (144 aa).

The interval 20 to 49 is disordered; sequence GRGIGSGLGKTGGRGHKGQKSRSGGFHKVG. Residues 21–31 show a composition bias toward gly residues; sequence RGIGSGLGKTG.

This sequence belongs to the universal ribosomal protein uL15 family. In terms of assembly, part of the 50S ribosomal subunit.

In terms of biological role, binds to the 23S rRNA. The sequence is that of Large ribosomal subunit protein uL15 from Neisseria meningitidis serogroup C (strain 053442).